We begin with the raw amino-acid sequence, 187 residues long: MPVDLSKWSGPLSLQEVDERPQHPLHVTYAGAAVDELGKVLTPTQVKNRPTSISWEGLDSGKLYTLVLTDPDAPSRKDPKYREWHHFLVVNMKGNDISSGTVLSDYVGSGPPKGTGLHRYVWLVYEQDRPLKCDEPILSNRSGDHRGKFKVASFRKKYELRAPVAGTCYQAEWDDYVPKLYEQLSGK.

Residues serine 6 and serine 13 each carry the phosphoserine modification. Threonine 42 carries the post-translational modification Phosphothreonine. Phosphoserine is present on residues serine 52, serine 54, serine 98, and serine 153. Residues 93-134 (KGNDISSGTVLSDYVGSGPPKGTGLHRYVWLVYEQDRPLKCD) are interaction with RAF1.

This sequence belongs to the phosphatidylethanolamine-binding protein family. In terms of assembly, has a tendency to form dimers by disulfide cross-linking. Interacts with RAF1 and this interaction is enhanced if RAF1 is phosphorylated on residues 'Ser-338', 'Ser-339', 'Tyr-340' and 'Tyr-341'. Interacts with ALOX15; in response to IL13/interleukin-13, prevents the interaction of PEBP1 with RAF1 to activate the ERK signaling cascade.

Its subcellular location is the cytoplasm. Binds ATP, opioids and phosphatidylethanolamine. Has lower affinity for phosphatidylinositol and phosphatidylcholine. Serine protease inhibitor which inhibits thrombin, neuropsin and chymotrypsin but not trypsin, tissue type plasminogen activator and elastase. Inhibits the kinase activity of RAF1 by inhibiting its activation and by dissociating the RAF1/MEK complex and acting as a competitive inhibitor of MEK phosphorylation. In terms of biological role, HCNP may be involved in the function of the presynaptic cholinergic neurons of the central nervous system. HCNP increases the production of choline acetyltransferase but not acetylcholinesterase. Seems to be mediated by a specific receptor. The chain is Phosphatidylethanolamine-binding protein 1 (PEBP1) from Pongo abelii (Sumatran orangutan).